The sequence spans 75 residues: MSSGGLLLLLGLLTLWAELTPISGQDRPKKPGLCPPRPQKPPCVRECKNDWRCPGEQKCCRYGCIYECRDPIFVK.

The signal sequence occupies residues 1–24; that stretch reads MSSGGLLLLLGLLTLWAELTPISG. The region spanning 27–72 is the WAP domain; that stretch reads RPKKPGLCPPRPQKPPCVRECKNDWRCPGEQKCCRYGCIYECRDPI. 4 disulfide bridges follow: C34–C60, C43–C64, C47–C59, and C53–C68.

The protein belongs to the venom waprin family. As to expression, expressed by the venom gland.

Its subcellular location is the secreted. Its function is as follows. Damages membranes of susceptible bacteria. Has no hemolytic activity. Not toxic to mice. Does not inhibit the proteinases elastase and cathepsin G. The protein is Carwaprin-a of Tropidechis carinatus (Australian rough-scaled snake).